A 77-amino-acid polypeptide reads, in one-letter code: Translation initiation factor IF-1, chloroplastic (77 aa).

The region spanning Met-1–Arg-71 is the S1-like domain.

It belongs to the IF-1 family. In terms of assembly, component of the 30S ribosomal translation pre-initiation complex which assembles on the 30S ribosome in the order IF-2 and IF-3, IF-1 and N-formylmethionyl-tRNA(fMet); mRNA recruitment can occur at any time during PIC assembly.

It is found in the plastid. The protein resides in the chloroplast. Its function is as follows. One of the essential components for the initiation of protein synthesis. Stabilizes the binding of IF-2 and IF-3 on the 30S subunit to which N-formylmethionyl-tRNA(fMet) subsequently binds. Helps modulate mRNA selection, yielding the 30S pre-initiation complex (PIC). Upon addition of the 50S ribosomal subunit IF-1, IF-2 and IF-3 are released leaving the mature 70S translation initiation complex. This Coffea arabica (Arabian coffee) protein is Translation initiation factor IF-1, chloroplastic.